The sequence spans 589 residues: RNA-directed RNA polymerase subunit beta (589 aa).

The region spanning 259 to 391 (RRAHEGSVTN…TNTKKTFSEG (133 aa)) is the RdRp catalytic domain. Mg(2+) is bound by residues D274, D359, and D360.

As to quaternary structure, homodimer; the replicase complex can dimerize. Part of the viral RNA-dependent RNA polymerase complex, the other subunits are the host ribosomal protein S1, EF-Tu and EF-Ts. S1 is needed for the initiation of genomic RNA (+)-strand replication. It depends on Mg(2+) as a cofactor.

The enzyme catalyses RNA(n) + a ribonucleoside 5'-triphosphate = RNA(n+1) + diphosphate. Functionally, this is the catalytic subunit of the viral RNA-dependent RNA polymerase complex. This complex is involved in viral RNA replication that produces (+)-stranded genomes via a complementary, (-)-stranded intermediate. Binds RNA cooperatively with the host ribosomal protein S1. In Escherichia coli (Bacteriophage Q-beta), this protein is RNA-directed RNA polymerase subunit beta.